The sequence spans 468 residues: Ribulose bisphosphate carboxylase large chain (468 aa).

Residue Lys-5 is modified to N6,N6,N6-trimethyllysine. Substrate-binding residues include Asn-114 and Thr-164. Catalysis depends on Lys-166, which acts as the Proton acceptor. Lys-168 is a binding site for substrate. Residues Lys-192, Asp-194, and Glu-195 each contribute to the Mg(2+) site. Lys-192 carries the post-translational modification N6-carboxylysine. The active-site Proton acceptor is His-285. 3 residues coordinate substrate: Arg-286, His-318, and Ser-370.

The protein belongs to the RuBisCO large chain family. Type I subfamily. Heterohexadecamer of 8 large chains and 8 small chains; disulfide-linked. The disulfide link is formed within the large subunit homodimers. The cofactor is Mg(2+). Post-translationally, the disulfide bond which can form in the large chain dimeric partners within the hexadecamer appears to be associated with oxidative stress and protein turnover.

The protein resides in the plastid. The protein localises to the chloroplast. The catalysed reaction is 2 (2R)-3-phosphoglycerate + 2 H(+) = D-ribulose 1,5-bisphosphate + CO2 + H2O. It catalyses the reaction D-ribulose 1,5-bisphosphate + O2 = 2-phosphoglycolate + (2R)-3-phosphoglycerate + 2 H(+). In terms of biological role, ruBisCO catalyzes two reactions: the carboxylation of D-ribulose 1,5-bisphosphate, the primary event in carbon dioxide fixation, as well as the oxidative fragmentation of the pentose substrate in the photorespiration process. Both reactions occur simultaneously and in competition at the same active site. The polypeptide is Ribulose bisphosphate carboxylase large chain (Catesbaea spinosa).